We begin with the raw amino-acid sequence, 209 residues long: Uridine kinase (209 aa).

12–19 (GGTGSGKS) is a binding site for ATP.

This sequence belongs to the uridine kinase family.

The protein resides in the cytoplasm. The catalysed reaction is uridine + ATP = UMP + ADP + H(+). It carries out the reaction cytidine + ATP = CMP + ADP + H(+). Its pathway is pyrimidine metabolism; CTP biosynthesis via salvage pathway; CTP from cytidine: step 1/3. The protein operates within pyrimidine metabolism; UMP biosynthesis via salvage pathway; UMP from uridine: step 1/1. The sequence is that of Uridine kinase from Clostridium tetani (strain Massachusetts / E88).